The primary structure comprises 295 residues: Probable intramembrane protease C25B8.17 (295 aa).

Residues 1–21 (MEGVILASSALFTVYIGAKWS) form a helical membrane-spanning segment. Residues 22–35 (AQEEEPEEKQLINK) lie on the Cytoplasmic side of the membrane. Residues 36 to 56 (RLAVLFPIFGGVTLVLMYLAL) form a helical membrane-spanning segment. At 57 to 63 (RYLSKEY) the chain is on the lumenal side. A helical transmembrane segment spans residues 64–84 (IQLILQGYASLASIICFVRSF). Residues 85–89 (NPKTT) are Cytoplasmic-facing. Residues 90–106 (FGKITATMSSIAIALFY) traverse the membrane as a helical segment. At 107-111 (FKTKH) the chain is on the lumenal side. Residues 112-130 (WMASNILAWALAANSISIM) traverse the membrane as a helical segment. The Cytoplasmic segment spans residues 131–139 (RIDSYNTGA). A helical membrane pass occupies residues 140-160 (LLLGALFFYDIYFVFGTEVMV). The active site involves Asp149. Residues 161–183 (TVATGIDIPAKYVLPQFKNPTRL) lie on the Lumenal side of the membrane. The helical transmembrane segment at 184 to 204 (SMLGLGDIVMPGLMLALMYRF) threads the bilayer. The active site involves Asp190. At 205-221 (DLHYYINSTSQPKKHST) the chain is on the cytoplasmic side. Residues 222–244 (YFRNTFIAYGLGLGVTNFALYYF) form a helical membrane-spanning segment. The Lumenal segment spans residues 245–249 (KAAQP). A PAL motif is present at residues 249–251 (PAL). A helical membrane pass occupies residues 250–268 (ALLYLSPACIVAPLLTAWY). Residues 269-295 (RDELKTLFSFRSETEDETDEQDKCKST) are Cytoplasmic-facing.

It belongs to the peptidase A22B family.

It is found in the endoplasmic reticulum membrane. It localises to the golgi apparatus membrane. This chain is Probable intramembrane protease C25B8.17, found in Schizosaccharomyces pombe (strain 972 / ATCC 24843) (Fission yeast).